Reading from the N-terminus, the 327-residue chain is Methionyl-tRNA formyltransferase (327 aa).

121-124 (SLLP) is a binding site for (6S)-5,6,7,8-tetrahydrofolate.

It belongs to the Fmt family.

The catalysed reaction is L-methionyl-tRNA(fMet) + (6R)-10-formyltetrahydrofolate = N-formyl-L-methionyl-tRNA(fMet) + (6S)-5,6,7,8-tetrahydrofolate + H(+). Functionally, attaches a formyl group to the free amino group of methionyl-tRNA(fMet). The formyl group appears to play a dual role in the initiator identity of N-formylmethionyl-tRNA by promoting its recognition by IF2 and preventing the misappropriation of this tRNA by the elongation apparatus. This Paraburkholderia phymatum (strain DSM 17167 / CIP 108236 / LMG 21445 / STM815) (Burkholderia phymatum) protein is Methionyl-tRNA formyltransferase.